Reading from the N-terminus, the 186-residue chain is Large ribosomal subunit protein uL5c (186 aa).

The protein belongs to the universal ribosomal protein uL5 family. Part of the 50S ribosomal subunit; contacts the 5S rRNA.

Its subcellular location is the plastid. The protein resides in the chloroplast. In terms of biological role, binds 5S rRNA, forms part of the central protuberance of the 50S subunit. The sequence is that of Large ribosomal subunit protein uL5c (rpl5) from Chaetosphaeridium globosum (Charophycean green alga).